A 181-amino-acid polypeptide reads, in one-letter code: Probable N-acetyltransferase YjcK (181 aa).

In terms of domain architecture, N-acetyltransferase spans 7-172 (IYVRPLEVTD…NGVWEDHQVL (166 aa)).

The protein belongs to the acetyltransferase family. RimJ subfamily.

The enzyme catalyses an N-terminal L-alpha-aminoacyl-[protein] + acetyl-CoA = N-terminal N(alpha)-acetyl-L-alpha-aminoacyl-[protein] + CoA + H(+). In terms of biological role, probable N-terminal protein acetyltransferase. This chain is Probable N-acetyltransferase YjcK (yjcK), found in Bacillus subtilis (strain 168).